Here is a 353-residue protein sequence, read N- to C-terminus: UPF0324 membrane protein PP_3661 (353 aa).

8 helical membrane passes run 20–42, 70–92, 105–127, 137–159, 166–188, 234–253, 266–288, and 326–348; these read LNGI…MPAI, ASWA…AFFG, WSGL…WCGM, ALLT…ESAL, SAMA…PLAI, MTRV…WISR, IAMP…QVLP, and ALAT…TLGV.

This sequence belongs to the UPF0324 family.

It is found in the cell membrane. The protein is UPF0324 membrane protein PP_3661 of Pseudomonas putida (strain ATCC 47054 / DSM 6125 / CFBP 8728 / NCIMB 11950 / KT2440).